Consider the following 1125-residue polypeptide: Transcription-repair-coupling factor (1125 aa).

Positions 597–758 (DMMSFKVMDR…LIKLRDISVL (162 aa)) constitute a Helicase ATP-binding domain. 610-617 (GDVGFGKT) contributes to the ATP binding site. Positions 711 to 714 (DEEQ) match the DEEQ box motif. Residues 774 to 933 (SFSELLIKHA…GFKIAMKDME (160 aa)) enclose the Helicase C-terminal domain.

In the N-terminal section; belongs to the UvrB family. The protein in the C-terminal section; belongs to the helicase family. RecG subfamily.

It localises to the cytoplasm. Functionally, couples transcription and DNA repair by recognizing RNA polymerase (RNAP) stalled at DNA lesions. Mediates ATP-dependent release of RNAP and its truncated transcript from the DNA, and recruitment of nucleotide excision repair machinery to the damaged site. In Borreliella burgdorferi (strain ATCC 35210 / DSM 4680 / CIP 102532 / B31) (Borrelia burgdorferi), this protein is Transcription-repair-coupling factor.